A 186-amino-acid chain; its full sequence is dCTP deaminase (186 aa).

107 to 112 (KSTYAR) is a binding site for dCTP. The active-site Proton donor/acceptor is the E133. DCTP-binding residues include Q152, Y166, and Q176.

This sequence belongs to the dCTP deaminase family. Homotrimer.

The catalysed reaction is dCTP + H2O + H(+) = dUTP + NH4(+). It functions in the pathway pyrimidine metabolism; dUMP biosynthesis; dUMP from dCTP (dUTP route): step 1/2. Its function is as follows. Catalyzes the deamination of dCTP to dUTP. This chain is dCTP deaminase, found in Campylobacter concisus (strain 13826).